The chain runs to 206 residues: N-(5'-phosphoribosyl)anthranilate isomerase (206 aa).

Belongs to the TrpF family.

The catalysed reaction is N-(5-phospho-beta-D-ribosyl)anthranilate = 1-(2-carboxyphenylamino)-1-deoxy-D-ribulose 5-phosphate. It functions in the pathway amino-acid biosynthesis; L-tryptophan biosynthesis; L-tryptophan from chorismate: step 3/5. The protein is N-(5'-phosphoribosyl)anthranilate isomerase of Pseudomonas putida (strain ATCC 47054 / DSM 6125 / CFBP 8728 / NCIMB 11950 / KT2440).